We begin with the raw amino-acid sequence, 488 residues long: E3 ubiquitin-protein ligase TRIM34 (488 aa).

The RING-type zinc-finger motif lies at 15-60 (CPICLELLTEPLSLDCGHSLCRACITVSNKEAVTSMGGKSSCPVCG). The B box-type zinc finger occupies 92-134 (KKRDLCDHHGEKLLLFCKEDRKVICWLCERSQEHRGHHTVLTE). Zn(2+) contacts are provided by Cys-97, His-100, Cys-119, and His-125. A coiled-coil region spans residues 131–239 (VLTEEVFKEC…VRELISDVEC (109 aa)). In terms of domain architecture, B30.2/SPRY spans 283-488 (LSRMLQMFRE…APMTLCPPSS (206 aa)).

Belongs to the TRIM/RBCC family. In terms of assembly, homotrimer. Interacts (via B-box and SPRY domain) with TRIM5. As to quaternary structure, (Microbial infection) Interacts (via the B30.2/SPRY domain) with HIV-1 capsid complexes. Is the most abundant form. It is highly expressed in the placenta, spleen, colon and peripheral blood leukocytes.

It localises to the cytoplasm. The protein resides in the mitochondrion. The enzyme catalyses S-ubiquitinyl-[E2 ubiquitin-conjugating enzyme]-L-cysteine + [acceptor protein]-L-lysine = [E2 ubiquitin-conjugating enzyme]-L-cysteine + N(6)-ubiquitinyl-[acceptor protein]-L-lysine.. Its pathway is protein modification; protein ubiquitination. Its function is as follows. Functions as antiviral protein and contributes to the defense against retroviral infections. Acts as a capsid-specific restriction factor with the help of TRIM5 and prevents infection from non-host-adapted retroviruses. During influenza A virus infection, promotes programmed cell death by targeting ZBP1 for 'Lys-63'-linked polyubiquitination. In turn, promotes ZBP1 recruitment of RIPK3 to mediate virus-induced programmed necrosis. Negatively regulates the function of mitochondria by enhancing mitochondrial depolarization leading to cytochrome c release and mitochondria-dependent apoptosis. Also promotes the formation of multinucleated giant cells by means of cell fusion and phagocytosis in epithelial cells. In Homo sapiens (Human), this protein is E3 ubiquitin-protein ligase TRIM34 (TRIM34).